The chain runs to 406 residues: Putative sodium-coupled neutral amino acid transporter 11 (406 aa).

Residues 1–7 are Cytoplasmic-facing; sequence MKQAGFP. Residues 8-28 traverse the membrane as a helical segment; the sequence is LGILLLFWVSYVTDFSLVLLI. The N-linked (GlcNAc...) asparagine glycan is linked to N44. 6 consecutive transmembrane segments (helical) span residues 48 to 68, 93 to 113, 121 to 141, 156 to 176, 202 to 222, and 241 to 263; these read GFPGYLLLSVLQFLYPFIAMI, VFIGRHFIIGLSTVTFTLPLS, LGKVSLISTGLTTLILGIVMA, AWVFAKPNAIQAVGVMSFAFI, MSIVISVFICIFFATCGYLTF, and VTFGRFCYGVTVILTYPMECFVT. A glycan (N-linked (GlcNAc...) asparagine) is linked at N275. The next 3 membrane-spanning stretches (helical) occupy residues 279-299, 301-321, and 340-360; these read VFHIVVTVMVITVATLVSLLI, CLGIVLELNGVLCATPLIFII, and IMSCVMLPIGAVVMVFGFVMA.

This sequence belongs to the amino acid/polyamine transporter 2 family.

The protein resides in the membrane. Its function is as follows. Putative sodium-dependent amino acid/proton antiporter. This is Putative sodium-coupled neutral amino acid transporter 11 (SLC38A11) from Homo sapiens (Human).